We begin with the raw amino-acid sequence, 215 residues long: Sodium channel regulatory subunit beta-2 (215 aa).

Residues 1–29 (MHRDAWLPRPAFSLTGLSLFFSLVPPGRS) form the signal peptide. Residues 30 to 157 (MEVTVPATLN…XEEPPERDST (128 aa)) are Extracellular-facing. In terms of domain architecture, Ig-like C2-type spans 32–154 (VTVPATLNVL…QVLXEEPPER (123 aa)). Asn42, Asn66, and Asn74 each carry an N-linked (GlcNAc...) asparagine glycan. 2 cysteine pairs are disulfide-bonded: Cys50/Cys127 and Cys72/Cys75. Residues 158–179 (VAVIVGASVGGFLAVVILVLMV) traverse the membrane as a helical segment. Topologically, residues 180-215 (VKCVRRKKEQKLSTDDLKTEEEGKTDGEGNPDDGAK) are cytoplasmic. Positions 187-215 (KEQKLSTDDLKTEEEGKTDGEGNPDDGAK) are disordered. Basic and acidic residues predominate over residues 189–215 (QKLSTDDLKTEEEGKTDGEGNPDDGAK). Ser192 carries the phosphoserine modification. Thr204 carries the phosphothreonine modification.

This sequence belongs to the sodium channel auxiliary subunit SCN2B (TC 8.A.17) family. A voltage-gated sodium (Nav) channel consists of an ion-conducting pore-forming alpha subunit functional on its own that is regulated by one or more beta subunits. The beta subunit SCN2B is disulfide-linked to the pore-forming alpha subunit. Interacts with SCN1A; regulatory subunit of SCN1A/Nav1.1. Interacts with SCN2A; regulatory subunit of SCN2A/Nav1.2. Interacts with SCN3A; regulatory subunit of SCN3A/Nav1.3. Interacts with SCN5A; regulatory subunit of SCN5A/Nav1.5. Interacts with SCN8A; regulatory subunit of SCN8A/Nav1.6. Interacts with SCN9A; regulatory subunit of SCN9A/Nav1.7. Interacts with SCN10A; regulatory subunit of SCN10A/Nav1.8. Interacts with TNR; may play a crucial role in clustering and regulation of activity of SCN2B-containing Nav channels at nodes of Ranvier.

It is found in the cell membrane. It localises to the cell projection. The protein resides in the axon. Functionally, regulatory subunit of multiple voltage-gated sodium (Nav) channels, that directly mediate the depolarization of excitable membranes. Navs, also called VGSCs (voltage-gated sodium channels) or VDSCs (voltage-dependent sodium channels), operate by switching between closed and open conformations depending on the voltage difference across the membrane. In the open conformation they allow Na(+) ions to selectively pass through the pore, along their electrochemical gradient. The influx of Na+ ions provokes membrane depolarization, initiating the propagation of electrical signals throughout cells and tissues. The accessory beta subunits participate in localization and functional modulation of the Nav channels. Modulates the activity of SCN1A/Nav1.1, SCN2A/Nav1.2, SCN2A/Nav1.3, SCN5A/Nav1.5, SCN8A/Nav1.6, SCN9A/Nav1.7 and SCN10A/Nav1.8. This Canis lupus familiaris (Dog) protein is Sodium channel regulatory subunit beta-2.